The primary structure comprises 482 residues: Glutamate--tRNA ligase 1 (482 aa).

A 'HIGH' region motif is present at residues 18–28; the sequence is PSPTGYLHLGG. The 'KMSKS' region signature appears at 252-256; that stretch reads KLSKR. Lys-255 lines the ATP pocket.

The protein belongs to the class-I aminoacyl-tRNA synthetase family. Glutamate--tRNA ligase type 1 subfamily. As to quaternary structure, monomer.

It localises to the cytoplasm. It catalyses the reaction tRNA(Glu) + L-glutamate + ATP = L-glutamyl-tRNA(Glu) + AMP + diphosphate. Its function is as follows. Catalyzes the attachment of glutamate to tRNA(Glu) in a two-step reaction: glutamate is first activated by ATP to form Glu-AMP and then transferred to the acceptor end of tRNA(Glu). This Erythrobacter litoralis (strain HTCC2594) protein is Glutamate--tRNA ligase 1.